The following is a 492-amino-acid chain: MWRGLWTLAAQAARGPRRLCTRRSSGAPAPGSGATIFALSSGQGRCGIAVIRTSGPASGHALRILTAPRDLPLARHASLRLLSDPRSGEPLDRALVLWFPGPQSFTGEDCVEFHVHGGPAVVSGVLQALGSVPGLRPAEAGEFTRRAFANGKLNLTEVEGLADLIHAETEAQRRQALRQLDGELGHLCRGWAETLTKALAHVEAYIDFGEDDNLEEGVLEQADIEVRALQVALGAHLRDARRGQRLRSGVHVVVTGPPNAGKSSLVNLLSRKPVSIVSPEPGTTRDVLETPVDLAGFPVLLSDTAGLREGVGPVEQEGVRRARERLEQADLILAMLDASDLASPSSCNFLATVVASVGAQSPSDSSQRLLLVLNKSDLLSPEGPGPGPDLPPHLLLSCLTGEGLDGLLEALRKELAAVCGDPSTDPPLLTRARHQHHLQGCLDALGHYKQSKDLALAAEALRVARGHLTRLTGGGGTEEILDIIFQDFCVGK.

A mitochondrion-targeting transit peptide spans 1–20 (MWRGLWTLAAQAARGPRRLC). 5,10-methylenetetrahydrofolate-binding residues include arginine 52, glutamate 112, and lysine 152. The region spanning 249–416 (GVHVVVTGPP…LLEALRKELA (168 aa)) is the TrmE-type G domain. GTP is bound by residues 256–263 (GPPNAGKS), 282–286 (GTTRD), 303–306 (DTAG), 374–377 (NKSD), and 397–399 (SCL). Asparagine 259 serves as a coordination point for K(+). Residues serine 263 and threonine 284 each contribute to the Mg(2+) site. Residue lysine 492 coordinates 5,10-methylenetetrahydrofolate.

The protein belongs to the TRAFAC class TrmE-Era-EngA-EngB-Septin-like GTPase superfamily. TrmE GTPase family. In terms of assembly, homodimer; forms a dimer in the presence of potassium. Interacts with MTO1; forms the GTPBP3-MTO1 complex composed of homodimers of GTPBP3 and MTO1. As to quaternary structure, homodimer, forms homodimer in vivo. K(+) is required as a cofactor. Ubiquitously expressed.

It localises to the mitochondrion. The protein localises to the cytoplasm. The enzyme catalyses GTP + H2O = GDP + phosphate + H(+). In terms of biological role, GTPase component of the GTPBP3-MTO1 complex that catalyzes the 5-taurinomethyluridine (taum(5)U) modification at the 34th wobble position (U34) of mitochondrial tRNAs (mt-tRNAs), which plays a role in mt-tRNA decoding and mitochondrial translation. Taum(5)U formation on mammalian mt-tRNA requires the presence of both GTPBP3-mediated GTPase activity and MTO1 catalytic activity. In Homo sapiens (Human), this protein is 5-taurinomethyluridine-[tRNA] synthase subunit GTPB3, mitochondrial.